We begin with the raw amino-acid sequence, 338 residues long: Cap-specific mRNA (nucleoside-2'-O-)-methyltransferase (338 aa).

Residue Tyr22 participates in mRNA binding. Residues Gln39, Tyr66, Gly68, Gly72, Asp95, Arg97, Val116, and Asp138 each contribute to the S-adenosyl-L-methionine site. Residues 169-249 are binding to NPH-I; it reads PAASSLKWRC…NKIIRNRIII (81 aa). Residues 169 to 333 form a binding to Rap94 region; it reads PAASSLKWRC…NTKKSVRGNK (165 aa). Residue Lys175 is the For methyltransferase activity of the active site. MRNA is bound by residues 177–180, Asp182, 205–207, and Glu233; these read RCPF and SAE. The segment at 305 to 338 is disordered; that stretch reads HHEPTQRKVPSKNTMLKSRNTKKSVRGNKQGRRT. The segment covering 323 to 338 has biased composition (basic residues); the sequence is RNTKKSVRGNKQGRRT.

Belongs to the class I-like SAM-binding methyltransferase superfamily. Poxvirus/kinetoplastid 2'-O-MTase family. Interacts with poly(A) polymerase catalytic subunit OPG063. Interacts with OPG109 and OPG123; these interactions might help linking transcription to capping and polyadenylation.

It localises to the virion. The enzyme catalyses a 5'-end (N(7)-methyl 5'-triphosphoguanosine)-ribonucleoside in mRNA + S-adenosyl-L-methionine = a 5'-end (N(7)-methyl 5'-triphosphoguanosine)-(2'-O-methyl-ribonucleoside) in mRNA + S-adenosyl-L-homocysteine + H(+). Displays methyltransferase, positive regulation of the poly(A) polymerase and transcription elongation activities. Involved in the modification of both mRNA ends and in intermediate and late gene positive transcription elongation. At the mRNAs 5' end, methylates the ribose 2' OH group of the first transcribed nucleotide, thereby producing a 2'-O-methylpurine cap. At the 3' end, functions as a processivity factor which stimulates the activity of the viral poly(A) polymerase OPG063 that creates mRNA's poly(A) tail. In the presence of OPG102, OPG063 does not dissociate from the RNA allowing tail elongation to around 250 adenylates. The sequence is that of Cap-specific mRNA (nucleoside-2'-O-)-methyltransferase (OPG102) from Oryctolagus cuniculus (Rabbit).